Consider the following 332-residue polypeptide: Chorismate synthase (332 aa).

An NADP(+)-binding site is contributed by arginine 46. FMN is bound by residues 123 to 125 (HFS), glycine 253, 268 to 272 (KPTSS), and arginine 295.

This sequence belongs to the chorismate synthase family. In terms of assembly, homotetramer. FMNH2 serves as cofactor.

The catalysed reaction is 5-O-(1-carboxyvinyl)-3-phosphoshikimate = chorismate + phosphate. It participates in metabolic intermediate biosynthesis; chorismate biosynthesis; chorismate from D-erythrose 4-phosphate and phosphoenolpyruvate: step 7/7. Catalyzes the anti-1,4-elimination of the C-3 phosphate and the C-6 proR hydrogen from 5-enolpyruvylshikimate-3-phosphate (EPSP) to yield chorismate, which is the branch point compound that serves as the starting substrate for the three terminal pathways of aromatic amino acid biosynthesis. This reaction introduces a second double bond into the aromatic ring system. The sequence is that of Chorismate synthase from Chitinophaga pinensis (strain ATCC 43595 / DSM 2588 / LMG 13176 / NBRC 15968 / NCIMB 11800 / UQM 2034).